A 330-amino-acid chain; its full sequence is GMP reductase (330 aa).

Catalysis depends on Cys180, which acts as the Thioimidate intermediate. 209–232 contributes to the NADP(+) binding site; the sequence is LIADGGIRHNGDIAKSVRFGASMV.

The protein belongs to the IMPDH/GMPR family. GuaC type 2 subfamily.

It catalyses the reaction IMP + NH4(+) + NADP(+) = GMP + NADPH + 2 H(+). Catalyzes the irreversible NADPH-dependent deamination of GMP to IMP. It functions in the conversion of nucleobase, nucleoside and nucleotide derivatives of G to A nucleotides, and in maintaining the intracellular balance of A and G nucleotides. The polypeptide is GMP reductase (Lactobacillus johnsonii (strain CNCM I-12250 / La1 / NCC 533)).